The sequence spans 685 residues: Threonine--tRNA ligase (685 aa).

The region spanning 1–65 (MSTPASAAPA…DTDVEVEPVA (65 aa)) is the TGS domain. A catalytic region spans residues 262–568 (DHRKLGSELD…LTEHYAGAFP (307 aa)). Residues C367, H418, and H545 each contribute to the Zn(2+) site.

The protein belongs to the class-II aminoacyl-tRNA synthetase family. As to quaternary structure, homodimer. Zn(2+) is required as a cofactor.

The protein localises to the cytoplasm. The enzyme catalyses tRNA(Thr) + L-threonine + ATP = L-threonyl-tRNA(Thr) + AMP + diphosphate + H(+). Catalyzes the attachment of threonine to tRNA(Thr) in a two-step reaction: L-threonine is first activated by ATP to form Thr-AMP and then transferred to the acceptor end of tRNA(Thr). Also edits incorrectly charged L-seryl-tRNA(Thr). The sequence is that of Threonine--tRNA ligase from Rhodococcus jostii (strain RHA1).